Here is a 316-residue protein sequence, read N- to C-terminus: Ribosomal RNA small subunit methyltransferase H (316 aa).

Residues 35–37 (AGH), aspartate 55, phenylalanine 84, aspartate 105, and glutamine 112 each bind S-adenosyl-L-methionine.

It belongs to the methyltransferase superfamily. RsmH family.

The protein localises to the cytoplasm. It catalyses the reaction cytidine(1402) in 16S rRNA + S-adenosyl-L-methionine = N(4)-methylcytidine(1402) in 16S rRNA + S-adenosyl-L-homocysteine + H(+). Specifically methylates the N4 position of cytidine in position 1402 (C1402) of 16S rRNA. This is Ribosomal RNA small subunit methyltransferase H from Streptococcus pneumoniae (strain ATCC 700669 / Spain 23F-1).